The sequence spans 80 residues: UPF0180 protein BPUM_1317 (80 aa).

The protein belongs to the UPF0180 family.

In Bacillus pumilus (strain SAFR-032), this protein is UPF0180 protein BPUM_1317.